Reading from the N-terminus, the 438-residue chain is Prenyltransferase malE (438 aa).

Residue glutamate 92 participates in substrate binding. Dimethylallyl diphosphate-binding residues include arginine 106, lysine 192, tyrosine 194, lysine 259, tyrosine 261, tyrosine 346, and tyrosine 411.

The protein belongs to the tryptophan dimethylallyltransferase family.

It catalyses the reaction (S)-3-(indol-3-ylmethyl)-6,7,8,8a-tetrahydropyrrolo[1,2-a]pyrazin-1-one + dimethylallyl diphosphate = (S)-3-{[2-(1,1-dimethylallyl)-indol-3-yl]methyl}-6,7,8,8a-tetrahydropyrrolo[1,2-a]pyrazin-1-one + diphosphate. The catalysed reaction is 1-hydroxy-3-(indol-3-ylmethyl)-6H,7H,8H-5lambda(5)-pyrrolo[1,2-a]pyrazine + dimethylallyl diphosphate = 1-hydroxy-3-{[2-(1,1-dimethylallyl)-indol-3-yl]methyl}-6H,7H,8H-5lambda(5)-pyrrolo[1,2-a]pyrazine + diphosphate. Its pathway is alkaloid biosynthesis. Its function is as follows. Prenyltransferase; part of the gene cluster that mediates the biosynthesis of malbrancheamide, a dichlorinated fungal indole alkaloid that belongs to a family of natural products containing a characteristic bicyclo[2.2.2]diazaoctane core. The first step of malbrancheamide biosynthesis involves coupling of L-proline and L-tryptophan by malG, a bimodular NRPS, to produce L-Pro-L-Trp aldehyde through reductive offloading. This compound undergoes spontaneous cyclization and dehydration to give a dienamine which is reverse prenylated at C-2 by malE. The other prenyltransferase present in the cluster, malB, displays modest activity, suggesting that may be a redundant gene in the pathway. Subsequently, a [4+2] Diels-Alder cyclo-addition catalyzed by the bifunctional enzyme malC forms the characteristic bicyclo[2.2.2]diazaoctane ring of premalbrancheamid. Finally, the flavin-dependent halogenase malA catalyzes the iterative dichlorination of the indole ring of premalbrancheamide to yield C-9 monochlorinated malbrancheamide B, C-8 monochlorinated isomalbrancheamide B, and dichlorinated malbrancheamide. MalA is also able to brominate premalbrancheamide at C-9 to yield malbrancheamide C, and, to a lesser extend, at C-8 to yield isomalbrancheamide C. Finally, malA can brominate C-9 monochlorinated malbrancheamide B at C-8 to yield malbrancheamide D, or C-8 monochlorinated isomalbrancheamide B at C-9 to produce isomalbrancheamide D. This is Prenyltransferase malE from Malbranchea aurantiaca.